Consider the following 453-residue polypeptide: Homogentisate 1,2-dioxygenase (453 aa).

The active-site Proton acceptor is the His306. Residues His349 and Glu355 each contribute to the Fe cation site. The homogentisate site is built by Tyr364 and His385. His385 contributes to the Fe cation binding site.

This sequence belongs to the homogentisate dioxygenase family. Hexamer; dimer of trimers. Fe cation is required as a cofactor.

It carries out the reaction homogentisate + O2 = 4-maleylacetoacetate + H(+). The protein operates within amino-acid degradation; L-phenylalanine degradation; acetoacetate and fumarate from L-phenylalanine: step 4/6. In terms of biological role, involved in the catabolism of homogentisate (2,5-dihydroxyphenylacetate or 2,5-OH-PhAc), a central intermediate in the degradation of phenylalanine and tyrosine. Catalyzes the oxidative ring cleavage of the aromatic ring of homogentisate to yield maleylacetoacetate. The polypeptide is Homogentisate 1,2-dioxygenase (Rhizobium leguminosarum bv. trifolii (strain WSM2304)).